Here is a 243-residue protein sequence, read N- to C-terminus: 35 kDa gas vesicle protein (243 aa).

The protein belongs to the gas vesicle GvpC family.

The protein localises to the gas vesicle shell. Functionally, may confer stability to the gas vesicle shells. Gas vesicles are small, hollow, gas filled protein structures that are found in several microbial planktonic microorganisms. They allow the positioning of the organism at the favorable depth for growth. The sequence is that of 35 kDa gas vesicle protein from Dactylococcopsis salina (strain PCC 8305) (Myxobactron salinum).